The sequence spans 957 residues: ERC protein 2 (957 aa).

The segment covering Met1–Gly13 has biased composition (polar residues). The interval Met1–Leu44 is disordered. Low complexity predominate over residues Ser14–Pro25. Residues Ser65 and Ser666 each carry the phosphoserine modification. Residues Arg140–Asp917 adopt a coiled-coil conformation. Positions Asp760 to Ala957 are involved in binding to RIMS1. The tract at residues Asp918–Ala957 is disordered. Over residues His922–His943 the composition is skewed to basic residues. Residues Asp948–Ala957 show a composition bias toward acidic residues.

Interacts with BSN, ERC1, PPFIA1, PPFIA2, PPFIA3 and PPFIA4. Interacts through its C-terminus with the PDZ domain of RIMS1. Part of a complex consisting of ERC2, RIMS1 and UNC13A. Predominantly expressed in brain, including hippocampus, cortex, cerebellum, amygdala and olfactory bulb.

The protein localises to the cytoplasm. Its subcellular location is the synapse. The protein resides in the presynaptic active zone. It localises to the cytoskeleton. Functionally, thought to be involved in the organization of the cytomatrix at the nerve terminals active zone (CAZ) which regulates neurotransmitter release. Seems to act together with BSN. May recruit liprin-alpha proteins to the CAZ. This is ERC protein 2 (Erc2) from Rattus norvegicus (Rat).